Consider the following 181-residue polypeptide: UPF0398 protein LMOf2365_1918 (181 aa).

This sequence belongs to the UPF0398 family.

The protein is UPF0398 protein LMOf2365_1918 of Listeria monocytogenes serotype 4b (strain F2365).